Consider the following 345-residue polypeptide: MLKVAINGFGRIGRNVLRAVYESGKHQQIKVVAVNELAQPEAMAHLLQYDTSHGRFGKKISHDQEHLYVHHDSSEYDPIRILHLAEIELLPWRDLEVDIVLDCTGVFGSQADGQAHIEAGAQKVLFSHPGASDLDNTIIYGVNHETLKDEHRVVSNGSCTTNCIVPIIKVLDEAFGIESGTITTIHSSMNDQQVIDAYHNDLRRTRAASQSIIPVDTKLHKGIERIFPKFSNKFEAISVRVPTVNVTAMDLSVTISTNVKVNDVNQTIVNASQCTLRDIVDYTESPLVSIDFNHDPHSAIVDGTQTRVSNGQLVKMLVWCDNEWGFANRMLDTALAMQASSQVEQ.

11-12 is a binding site for NAD(+); sequence RI. Substrate is bound by residues 158–160, R204, 217–218, and R240; these read SCT and TK. C159 serves as the catalytic Nucleophile. Residue N322 coordinates NAD(+).

Belongs to the glyceraldehyde-3-phosphate dehydrogenase family. Epd subfamily. Homotetramer.

It localises to the cytoplasm. It carries out the reaction D-erythrose 4-phosphate + NAD(+) + H2O = 4-phospho-D-erythronate + NADH + 2 H(+). It participates in cofactor biosynthesis; pyridoxine 5'-phosphate biosynthesis; pyridoxine 5'-phosphate from D-erythrose 4-phosphate: step 1/5. In terms of biological role, catalyzes the NAD-dependent conversion of D-erythrose 4-phosphate to 4-phosphoerythronate. The protein is D-erythrose-4-phosphate dehydrogenase of Vibrio campbellii (strain ATCC BAA-1116).